Consider the following 921-residue polypeptide: Protein translocase subunit SecA (921 aa).

Residues glutamine 87, glycine 105 to threonine 109, and aspartate 501 contribute to the ATP site. Residues proline 831–glutamate 886 form a disordered region. Pro residues predominate over residues alanine 872 to valine 881. Zn(2+) is bound by residues cysteine 905, cysteine 907, cysteine 916, and histidine 917.

The protein belongs to the SecA family. As to quaternary structure, monomer and homodimer. Part of the essential Sec protein translocation apparatus which comprises SecA, SecYEG and auxiliary proteins SecDF-YajC and YidC. Zn(2+) serves as cofactor.

Its subcellular location is the cell inner membrane. It localises to the cytoplasm. It catalyses the reaction ATP + H2O + cellular proteinSide 1 = ADP + phosphate + cellular proteinSide 2.. In terms of biological role, part of the Sec protein translocase complex. Interacts with the SecYEG preprotein conducting channel. Has a central role in coupling the hydrolysis of ATP to the transfer of proteins into and across the cell membrane, serving both as a receptor for the preprotein-SecB complex and as an ATP-driven molecular motor driving the stepwise translocation of polypeptide chains across the membrane. This Gluconobacter oxydans (strain 621H) (Gluconobacter suboxydans) protein is Protein translocase subunit SecA.